The sequence spans 483 residues: Glutamyl-tRNA(Gln) amidotransferase subunit A (483 aa).

Catalysis depends on charge relay system residues K76 and S151. S175 acts as the Acyl-ester intermediate in catalysis.

The protein belongs to the amidase family. GatA subfamily. In terms of assembly, heterotrimer of A, B and C subunits.

The enzyme catalyses L-glutamyl-tRNA(Gln) + L-glutamine + ATP + H2O = L-glutaminyl-tRNA(Gln) + L-glutamate + ADP + phosphate + H(+). Functionally, allows the formation of correctly charged Gln-tRNA(Gln) through the transamidation of misacylated Glu-tRNA(Gln) in organisms which lack glutaminyl-tRNA synthetase. The reaction takes place in the presence of glutamine and ATP through an activated gamma-phospho-Glu-tRNA(Gln). The sequence is that of Glutamyl-tRNA(Gln) amidotransferase subunit A from Pseudomonas putida (strain GB-1).